Consider the following 322-residue polypeptide: Prephenate dehydratase (322 aa).

In terms of domain architecture, Prephenate dehydratase spans 5–191 (RIAYLGPEGT…ARTRFVLVGM (187 aa)). An ACT domain is found at 205 to 282 (SAVLRIDNAP…ADVCYLGSWP (78 aa)). A disordered region spans residues 286 to 322 (ATGPTVSPPPPDEASRWLARLRAGKPDQASEPGGGKL).

Homodimer.

It carries out the reaction prephenate + H(+) = 3-phenylpyruvate + CO2 + H2O. It participates in amino-acid biosynthesis; L-phenylalanine biosynthesis; phenylpyruvate from prephenate: step 1/1. This chain is Prephenate dehydratase (pheA), found in Mycobacterium leprae (strain Br4923).